The following is a 290-amino-acid chain: 3-keto-disaccharide hydrolase (290 aa).

Positions 1 to 19 (MKKVFYPLACCLAAGVLVS) are cleaved as a signal peptide. C20 carries the N-palmitoyl cysteine lipid modification. C20 carries the S-diacylglycerol cysteine lipid modification.

Its subcellular location is the cell membrane. The enzyme catalyses 3-dehydro-alpha,alpha-trehalose + H2O = 3-dehydro-D-glucose + D-glucose. In terms of biological role, 3-keto-disaccharide hydrolase that preferentially hydrolyzes 3-keto-trehalose (3-dehydro-alpha,alpha-trehalose). Important for disaccharide utilization in the human gut. Also shows hydrolysis activity with the glucosinolates glucoraphanin or glucobrassicin, but with much lower efficiency. This chain is 3-keto-disaccharide hydrolase, found in Bacteroides thetaiotaomicron (strain ATCC 29148 / DSM 2079 / JCM 5827 / CCUG 10774 / NCTC 10582 / VPI-5482 / E50).